The sequence spans 1427 residues: Coiled-coil domain-containing protein 144A (1427 aa).

Over residues 1–11 (MASWGGEKRGG) the composition is skewed to basic and acidic residues. Disordered stretches follow at residues 1–32 (MASWGGEKRGGAEGSPKPAVYATRKTPSVGSQ), 87–189 (AARS…LTER), 213–261 (LPEN…CDRE), 453–485 (NMNQNSDSGSTNNYKSLKPKLENLSSLPPDSDR), and 528–586 (EEEM…EVKN). Composition is skewed to polar residues over residues 129 to 150 (PESLPQNNNPDWHPTNLTLSDE) and 167 to 178 (VSPSMPENQSAT). Acidic residues predominate over residues 224–234 (QDSELTSEEEQ). Over residues 453-467 (NMNQNSDSGSTNNYK) the composition is skewed to polar residues. The stretch at 490–545 (YLHEELQQDMQKFKNEVNTLEEEFLALKKEDVQLHKDVEEEMEKHRSNSTELSGTL) forms a coiled coil. Residues 528–537 (EEEMEKHRSN) show a composition bias toward basic and acidic residues. Residues 543–552 (GTLTDGTTVG) are compositionally biased toward low complexity. Residues 563–584 (PRKENGEHDRPADKTSNEKNEV) show a composition bias toward basic and acidic residues. 2 coiled-coil regions span residues 648–1129 (LLKL…DLTE) and 1155–1309 (FSMK…TQLT).

This sequence belongs to the CCDC144 family.

May play a role in preventing the formation of kidney stones through inhibition of calcium oxalate monohydrate (COM) crystallization, attenuating COM-induced apoptotic injury to renal epithelial cells. May exhibit antilithiatic (preventing the formation of kidney stones) activity through crystal binding, hindering the crystal attachment to renal epithelial cells, a pre-requisite to initiate inflammatory response. In Homo sapiens (Human), this protein is Coiled-coil domain-containing protein 144A (CCDC144A).